The primary structure comprises 584 residues: MFGIQESIQRSGSSMKEEPLGSGMNAVRTWMQGAGVLDANTAAQSGVGLARAHFEKQPPSNLRKSNFFHFVLALYDRQGQPVEIERTAFVGFVEKEKEANSEKTNNGIHYRLQLLYSNGIRTEQDFYVRLIDSMTKQAIVYEGQDKNPEMCRVLLTHEIMCSRCCDKKSCGNRNETPSDPVIIDRFFLKFFLKCNQNCLKNAGNPRDMRRFQVVVSTTVNVDGHVLAVSDNMFVHNNSKHGRRARRLDPSEAATPCIKAISPSEGWTTGGATVIIIGDNFFDGLQVIFGTMLVWSELITPHAIRVQTPPRHIPGVVEVTLSYKSKQFCKGTPGRFIYTALNEPTIDYGFQRLQKVIPRHPGDPERLPKEVILKRAADLVEALYGMPHNNQEIILKRAADIAEALYSVPRNHNQLPALANTSVHAGMMGVNSFSGQLAVNVSEASQATNQGFTRNSSSVSPHGYVPSTTPQQTNYNSVTTSMNGYGSAAMSNLGGSPTFLNGSAANSPYAIVPSSPTMASSTSLPSNCSSSSGIFSFSPANMVSAVKQKSAFAPVVRPQTSPPPTCTSTNGNSLQAISGMIVPPM.

Position 1 is an N-acetylmethionine (M1). Positions M1–S14 are enriched in polar residues. The tract at residues M1–G21 is disordered. K16 is covalently cross-linked (Glycyl lysine isopeptide (Lys-Gly) (interchain with G-Cter in SUMO1); alternate). A Glycyl lysine isopeptide (Lys-Gly) (interchain with G-Cter in SUMO2); alternate cross-link involves residue K16. Residues R63–N66 are interaction with DNA. The C5-type zinc-finger motif lies at C151 to C170. Interaction with DNA regions lie at residues N197–N204 and N236–K239. An IPT/TIG domain is found at P255–T338. The segment at G450–N473 is disordered.

This sequence belongs to the COE family. In terms of assembly, homodimer. Interacts with ZNF423 and ZNF521, leading to prevent EBF1 to bind DNA and activate target genes. Interacts with CCR4-NOT component CNOT3. In terms of tissue distribution, expressed exclusively in olfactory receptor neurons and their precursors.

It is found in the nucleus. Functionally, key pioneer transcription factor of B-cell specification and commitment. Recognizes variations of the palindromic sequence 5'-ATTCCCNNGGGAATT-3'. Operates in a transcription factor network to activate B-cell-specific genes and repress genes associated with alternative cell fates. For instance, positively regulates many B-cell specific genes including BCR or CD40 while repressing genes that direct cells into alternative lineages, including GATA3 and TCF7 for the T-cell lineage. In addition to its role during lymphopoiesis, controls the thermogenic gene program in adipocytes during development and in response to environmental cold. This chain is Transcription factor COE1 (Ebf1), found in Rattus norvegicus (Rat).